The sequence spans 349 residues: Fructose-1,6-bisphosphatase class 1 (349 aa).

The Mg(2+) site is built by E91, D110, L112, and D113. Residues 113-116 (DGSS) and N205 each bind substrate. E277 is a binding site for Mg(2+).

It belongs to the FBPase class 1 family. Homotetramer. It depends on Mg(2+) as a cofactor.

It localises to the cytoplasm. It carries out the reaction beta-D-fructose 1,6-bisphosphate + H2O = beta-D-fructose 6-phosphate + phosphate. Its pathway is carbohydrate biosynthesis; gluconeogenesis. The sequence is that of Fructose-1,6-bisphosphatase class 1 from Rhizobium meliloti (strain 1021) (Ensifer meliloti).